A 181-amino-acid chain; its full sequence is ATP synthase subunit b (181 aa).

Residues Leu24–Val44 traverse the membrane as a helical segment.

Belongs to the ATPase B chain family. In terms of assembly, F-type ATPases have 2 components, F(1) - the catalytic core - and F(0) - the membrane proton channel. F(1) has five subunits: alpha(3), beta(3), gamma(1), delta(1), epsilon(1). F(0) has three main subunits: a(1), b(2) and c(10-14). The alpha and beta chains form an alternating ring which encloses part of the gamma chain. F(1) is attached to F(0) by a central stalk formed by the gamma and epsilon chains, while a peripheral stalk is formed by the delta and b chains.

Its subcellular location is the cell membrane. Its function is as follows. F(1)F(0) ATP synthase produces ATP from ADP in the presence of a proton or sodium gradient. F-type ATPases consist of two structural domains, F(1) containing the extramembraneous catalytic core and F(0) containing the membrane proton channel, linked together by a central stalk and a peripheral stalk. During catalysis, ATP synthesis in the catalytic domain of F(1) is coupled via a rotary mechanism of the central stalk subunits to proton translocation. In terms of biological role, component of the F(0) channel, it forms part of the peripheral stalk, linking F(1) to F(0). This chain is ATP synthase subunit b, found in Mycoplasma mycoides subsp. mycoides SC (strain CCUG 32753 / NCTC 10114 / PG1).